The primary structure comprises 187 residues: Large ribosomal subunit protein eL18x (187 aa).

The disordered stretch occupies residues 150-187; that stretch reads HFGPAPGVPHSNTKPYVRHKGRKFEKARGKRKSRGFKV. Residues 165–187 are compositionally biased toward basic residues; sequence YVRHKGRKFEKARGKRKSRGFKV.

This sequence belongs to the eukaryotic ribosomal protein eL18 family.

The protein is Large ribosomal subunit protein eL18x (RPL18C) of Arabidopsis thaliana (Mouse-ear cress).